The following is a 545-amino-acid chain: ATP synthase subunit alpha (545 aa).

Residue 173 to 180 coordinates ATP; it reads GDRKTGKT.

The protein belongs to the ATPase alpha/beta chains family. As to quaternary structure, F-type ATPases have 2 components, CF(1) - the catalytic core - and CF(0) - the membrane proton channel. CF(1) has five subunits: alpha(3), beta(3), gamma(1), delta(1), epsilon(1). CF(0) has three main subunits: a(1), b(2) and c(9-12). The alpha and beta chains form an alternating ring which encloses part of the gamma chain. CF(1) is attached to CF(0) by a central stalk formed by the gamma and epsilon chains, while a peripheral stalk is formed by the delta and b chains.

Its subcellular location is the cell membrane. The enzyme catalyses ATP + H2O + 4 H(+)(in) = ADP + phosphate + 5 H(+)(out). Functionally, produces ATP from ADP in the presence of a proton gradient across the membrane. The alpha chain is a regulatory subunit. The sequence is that of ATP synthase subunit alpha from Renibacterium salmoninarum (strain ATCC 33209 / DSM 20767 / JCM 11484 / NBRC 15589 / NCIMB 2235).